The following is a 351-amino-acid chain: Fe-S cluster assembly protein DRE2 (351 aa).

The tract at residues 1 to 151 (MATTGRVLLL…KPDIGAQQAI (151 aa)) is N-terminal SAM-like domain. Residues 93–118 (RNRENKPWGLSDGNGNNANSSRRYND) form a disordered region. Over residues 105-114 (GNGNNANSSR) the composition is skewed to polar residues. The linker stretch occupies residues 152 to 243 (PLKLGRRRKE…EDELLDEDDM (92 aa)). [2Fe-2S] cluster contacts are provided by Cys-253, Cys-264, Cys-267, and Cys-269. The segment at 253–269 (CRPKPGKRRRACKDCSC) is fe-S binding site A. Residues Cys-314, Cys-317, Cys-325, and Cys-328 each contribute to the [4Fe-4S] cluster site. 2 short sequence motifs (cx2C motif) span residues 314–317 (CGNC) and 325–328 (CDGC). Residues 314–328 (CGNCSLGDAFRCDGC) form a fe-S binding site B region.

This sequence belongs to the anamorsin family. In terms of assembly, monomer. Interacts with TAH18. Interacts with MIA40. The cofactor is [2Fe-2S] cluster. Requires [4Fe-4S] cluster as cofactor.

The protein localises to the cytoplasm. It is found in the mitochondrion intermembrane space. In terms of biological role, component of the cytosolic iron-sulfur (Fe-S) protein assembly (CIA) machinery required for the maturation of extramitochondrial Fe-S proteins. Part of an electron transfer chain functioning in an early step of cytosolic Fe-S biogenesis, facilitating the de novo assembly of a [4Fe-4S] cluster on the scaffold complex CFD1-NBP35. Electrons are transferred to DRE2 from NADPH via the FAD- and FMN-containing protein TAH18. TAH18-DRE2 are also required for the assembly of the diferric tyrosyl radical cofactor of ribonucleotide reductase (RNR), probably by providing electrons for reduction during radical cofactor maturation in the catalytic small subunit RNR2. The chain is Fe-S cluster assembly protein DRE2 from Ajellomyces capsulatus (strain H143) (Darling's disease fungus).